A 601-amino-acid chain; its full sequence is Putative helicase 7 (601 aa).

A Helicase ATP-binding domain is found at 17-182 (QSFLMSDKNL…IIDAEIIKTD (166 aa)). 30 to 37 (APTGTGKS) lines the ATP pocket. The DEAH box motif lies at 129–132 (DEIH). The 168-residue stretch at 208-375 (LKEDFIKKMV…VLEDFLLALI (168 aa)) folds into the Helicase C-terminal domain.

This chain is Putative helicase 7 (SIFV0007), found in Saccharolobus islandicus (Sulfolobus islandicus).